Here is a 232-residue protein sequence, read N- to C-terminus: UPF0173 metal-dependent hydrolase Msil_0741 (232 aa).

The protein belongs to the UPF0173 family.

In Methylocella silvestris (strain DSM 15510 / CIP 108128 / LMG 27833 / NCIMB 13906 / BL2), this protein is UPF0173 metal-dependent hydrolase Msil_0741.